Reading from the N-terminus, the 592-residue chain is Arginine--tRNA ligase (592 aa).

The 'HIGH' region motif lies at 139–149 (ANPNGPLHIGH).

It belongs to the class-I aminoacyl-tRNA synthetase family.

The protein localises to the cytoplasm. It carries out the reaction tRNA(Arg) + L-arginine + ATP = L-arginyl-tRNA(Arg) + AMP + diphosphate. The protein is Arginine--tRNA ligase of Methanopyrus kandleri (strain AV19 / DSM 6324 / JCM 9639 / NBRC 100938).